The sequence spans 239 residues: MGQKINPLGFRLGTTQKHHSFWFAQPKNYSEGLQEDKKIRDCIKNYIQKNRKKSSNRKLESDSSSEVITHNRKNDSGSSSEVITRIEIQKEIDTIHVIIHIGFPNLLKKKGAIEELEKDLQKEIHSVNQRLNISIEKVKEPYREPNILAEYIAFQLKNRVSFRKAMKKAMELTKKADIKGVKVKIAGRLGGKEIARAECIKKGRLPLQTIRAKIDYCCYPIRTIYGVLGVKIWIFVDEE.

Positions 43-139 (IKNYIQKNRK…RLNISIEKVK (97 aa)) constitute a KH type-2 domain. The interval 50–80 (NRKKSSNRKLESDSSSEVITHNRKNDSGSSS) is disordered.

Belongs to the universal ribosomal protein uS3 family. As to quaternary structure, part of the 30S ribosomal subunit.

It localises to the plastid. Its subcellular location is the chloroplast. This is Small ribosomal subunit protein uS3c (rps3) from Lolium perenne (Perennial ryegrass).